The primary structure comprises 94 residues: Large ribosomal subunit protein bL27 (94 aa).

The propeptide occupies 1 to 9; sequence MLRLDLQFF.

Belongs to the bacterial ribosomal protein bL27 family. Post-translationally, the N-terminus is cleaved by ribosomal processing cysteine protease Prp.

This chain is Large ribosomal subunit protein bL27, found in Bacillus velezensis (strain DSM 23117 / BGSC 10A6 / LMG 26770 / FZB42) (Bacillus amyloliquefaciens subsp. plantarum).